Consider the following 77-residue polypeptide: U11-lycotoxin-Ls1a (77 aa).

An N-terminal signal peptide occupies residues 1-20 (MKLIILTGLVLFAIVSLIEA). Positions 21-26 (EEESGR) are excised as a propeptide.

The protein belongs to the neurotoxin 19 (CSTX) family. 10 (U11-Lctx) subfamily. Post-translationally, contains 4 disulfide bonds. In terms of tissue distribution, expressed by the venom gland.

It is found in the secreted. The polypeptide is U11-lycotoxin-Ls1a (Lycosa singoriensis (Wolf spider)).